A 1069-amino-acid polypeptide reads, in one-letter code: RE1-silencing transcription factor (1069 aa).

The interval 32–121 (DLHDLSKAEL…SLELSVVEPQ (90 aa)) is interaction with SIN3A. The tract at residues 43-57 (APQLIMLANVALTGE) is interaction with SIN3B. The interval 85–104 (SDSEGEGLEESAELKGDPSG) is disordered. An interaction with ZFP90 region spans residues 144-417 (PVAEDKCKNL…KSKHPTCPSK (274 aa)). Residues 158–180 (FRCKPCQYEAESEEQFVHHIRVH) form a C2H2-type 1 zinc finger. Positions 200 to 211 (SGASPSEEGEFS) are required for binding to the neuron-restrictive silencer element. 7 C2H2-type zinc fingers span residues 215–237 (IRCDRCGYNTNRYDHYTAHLKHH), 247–269 (YKCIICTYTTVSEYHWRKHLRNH), 275–297 (YTCSKCNYFSTEKNNYVQHVRTH), 303–325 (YKCELCPYSSSQKTHLTRHMRTH), 331–354 (FKCDQCNYVASNQHEVTRHARQVH), 360–382 (LNCPHCDYKTADRSNFKKHVELH), and 388–411 (FNCPVCDYAASKKCNLQYHFKSKH). Disordered regions lie at residues 425-737 (KLKK…MELP) and 830-1022 (KASK…GKEG). Positions 451–482 (EQAKTKGVDASARRSERPVKGVGKDVPKEKKP) are enriched in basic and acidic residues. Polar residues predominate over residues 484 to 493 (SNASVVQVTT). Basic and acidic residues-rich tracts occupy residues 498–511 (SAVETKAAEGKHTD) and 554–576 (ESKPKTSGEVPKGSRVEDRKADK). Over residues 584–600 (KGGKKTALKTKTAKKGS) the composition is skewed to basic residues. A compositionally biased stretch (polar residues) spans 630–643 (AVVTPSGSTQTELS). 2 stretches are compositionally biased toward pro residues: residues 679–706 (PSPPQEPPQVEPPACVEPPPPVEPPCPM) and 713–734 (PSPPMEPSQVEPPPHLEPPLPM). 2 stretches are compositionally biased toward basic and acidic residues: residues 851 to 860 (RREETPKDQE) and 876 to 886 (GGTEEAGESRA). Positions 894–904 (STSALSSEQSS) are enriched in low complexity. The span at 930–943 (TEQKTDRVPLKDSA) shows a compositional bias: basic and acidic residues. The residue at position 948 (serine 948) is a Phosphoserine. Over residues 957–968 (EAAAPAVVASPP) the composition is skewed to low complexity. Residues 981-1059 (EGIHSHDGSD…HLNRHLVNVY (79 aa)) form an interaction with RCOR1 region. Residues 1032–1054 (FVCIFCDRSFRKEKDYSKHLNRH) form a C2H2-type 9 zinc finger.

In terms of assembly, isoform 1 and isoform 6 form heterodimers. Isoform 6: Forms homodimers and homooligomers; binds to the neuron-restrictive silencer element (NRSE) as monomer. Interacts with SIN3A, SIN3B and RCOR1. Interacts with CDYL. Interacts with EHMT1 and EHMT2 only in the presence of CDYL. Part of a complex containing at least CDYL, REST, WIZ, SETB1, EHMT1 and EHMT2. Interacts (via zinc-finger DNA-binding domain) with ZFP90 (via N- and C-termini); the interaction inhibits REST repressor activity. Interacts (via C2H2-type zinc finger 5) with PRICKLE1. Interacts with FBXW11 and BTRC. Interacts with USP7. O-glycosylated. Post-translationally, phosphorylated; phosphorylation is required for ubiquitination. In terms of processing, ubiquitinated; ubiquitination is mediated by BTRC and leads to proteasomal degradation in G2 phase. Ubiquitination increases during neuronal differentiation. Deubiquitinated by USP7; leading to its stabilization and promoting the maintenance of neural progenitor cells. As to expression, expressed in the hippocampus including the granule cell layer of the dentate gyrus, the pyramidal cell layers of CA1 and CA3, the apical and basilar dendrite layers of the stratum radiatum and stratum oriens of CA1, the stratum lucidum and stratum oriens of CA3 and in astroglia (at protein level). Expressed in the brain, with the highest levels in the neurons of hippocampus, pons/medulla and midbrain.

The protein resides in the nucleus. The protein localises to the cytoplasm. Functionally, transcriptional repressor which binds neuron-restrictive silencer element (NRSE) and represses neuronal gene transcription in non-neuronal cells. Restricts the expression of neuronal genes by associating with two distinct corepressors, SIN3A and RCOR1, which in turn recruit histone deacetylase to the promoters of REST-regulated genes. Mediates repression by recruiting the BHC complex at RE1/NRSE sites which acts by deacetylating and demethylating specific sites on histones, thereby acting as a chromatin modifier. Transcriptional repression by REST-CDYL via the recruitment of histone methyltransferase EHMT2 may be important in transformation suppression. Represses the expression of SRRM4 in non-neural cells to prevent the activation of neural-specific splicing events and to prevent production of REST isoform 6. Repressor activity may be inhibited by forming heterodimers with isoform 6, thereby preventing binding to NRSE or binding to corepressors and leading to derepression of target genes. Also maintains repression of neuronal genes in neural stem cells, and allows transcription and differentiation into neurons by dissociation from RE1/NRSE sites of target genes. Thereby is involved in maintaining the quiescent state of adult hippocampal neural stem cells and preventing premature differentiation into mature neurons. Plays a role in the developmental switch in synaptic NMDA receptor composition during postnatal development, by repressing GRIN2B expression and thereby altering NMDA receptor properties from containing primarily GRIN2B to primarily GRIN2A subunits. Acts as a regulator of osteoblast differentiation. Key repressor of gene expression in hypoxia; represses genes in hypoxia by direct binding to an RE1/NRSE site on their promoter regions. May also function in stress resistance in the brain during aging; possibly by regulating expression of genes involved in cell death and in the stress response. Repressor of gene expression in the hippocampus after ischemia by directly binding to RE1/NRSE sites and recruiting SIN3A and RCOR1 to promoters of target genes, thereby promoting changes in chromatin modifications and ischemia-induced cell death. After ischemia, might play a role in repression of miR-132 expression in hippocampal neurons, thereby leading to neuronal cell death. Binds to the 3' region of the neuron-restrictive silencer element (NRSE), with lower affinity than full-length REST isoform 1. Exhibits weaker repressor activity compared to isoform 1. May negatively regulate the repressor activity of isoform 1 by binding to isoform 1, thereby preventing its binding to NRSE and leading to derepression of target genes. However, in another study, does not appear to be implicated in repressor activity of a NRSE motif-containing reporter construct nor in inhibitory activity on the isoform 1 transcriptional repressor activity. Post-transcriptional inactivation of REST by SRRM4-dependent alternative splicing into isoform 6 is required in mechanosensory hair cells in the inner ear for derepression of neuronal genes and hearing. The polypeptide is RE1-silencing transcription factor (Rest) (Rattus norvegicus (Rat)).